A 103-amino-acid polypeptide reads, in one-letter code: Protamine-3 (103 aa).

Residues 1–103 (MGSRCAKLNT…QSPEPKRTPS (103 aa)) form a disordered region. Low complexity predominate over residues 10-21 (TGQSPGHSPGHS). Residues 50-66 (GEEEEEEEEEGEEEEKE) show a composition bias toward acidic residues. The segment covering 78–90 (EPERQEEGHKDNA) has biased composition (basic and acidic residues). Ser-95 is modified (phosphoserine).

The protein belongs to the protamine P3 family.

Its subcellular location is the nucleus. It localises to the chromosome. Its function is as follows. Protamines substitute for histones in the chromatin of sperm during the haploid phase of spermatogenesis. They compact sperm DNA into a highly condensed, stable and inactive complex. This chain is Protamine-3 (PRM3), found in Homo sapiens (Human).